The following is an 811-amino-acid chain: Leucine--tRNA ligase (811 aa).

The short motif at 38-49 is the 'HIGH' region element; sequence SYPSGSNLHAGH. The 'KMSKS' region motif lies at 570 to 574; the sequence is KMSKS. Residue Lys573 coordinates ATP.

Belongs to the class-I aminoacyl-tRNA synthetase family.

The protein resides in the cytoplasm. The enzyme catalyses tRNA(Leu) + L-leucine + ATP = L-leucyl-tRNA(Leu) + AMP + diphosphate. The protein is Leucine--tRNA ligase of Clostridium kluyveri (strain ATCC 8527 / DSM 555 / NBRC 12016 / NCIMB 10680 / K1).